The following is a 116-amino-acid chain: Large ribosomal subunit protein bL20 (116 aa).

This sequence belongs to the bacterial ribosomal protein bL20 family.

In terms of biological role, binds directly to 23S ribosomal RNA and is necessary for the in vitro assembly process of the 50S ribosomal subunit. It is not involved in the protein synthesizing functions of that subunit. The chain is Large ribosomal subunit protein bL20 from Bacteroides thetaiotaomicron (strain ATCC 29148 / DSM 2079 / JCM 5827 / CCUG 10774 / NCTC 10582 / VPI-5482 / E50).